The sequence spans 291 residues: MSSPRERRPASQAPRLSRRPPAHQTSRSSPDTTAPTGSGLSNRFVNDNGIVTDTTASGTNCPPPPRAAARRASSPGESPQLVIFDLDGTLTDSARGIVSSFRHALNHIGAPVPEGDLATHIVGPPMHETLRAMGLGESAEEAIVAYRADYSARGWAMNSLFDGIGPLLADLRTAGVRLAVATSKAEPTARRILRHFGIEQHFEVIAGASTDGSRGSKVDVLAHALAQLRPLPERLVMVGDRSHDVDGAAAHGIDTVVVGWGYGRADFIDKTSTTVVTHAATIDELREALGV.

The tract at residues 1–79 (MSSPRERRPA…RRASSPGESP (79 aa)) is disordered. Over residues 23-60 (HQTSRSSPDTTAPTGSGLSNRFVNDNGIVTDTTASGTN) the composition is skewed to polar residues. Phosphotyrosine is present on tyrosine 262.

The protein belongs to the HAD-like hydrolase superfamily. CbbY/CbbZ/Gph/YieH family. In terms of assembly, interacts with PtpA. In terms of processing, autophosphorylated.

The catalysed reaction is L-tyrosyl-[protein] + ATP = O-phospho-L-tyrosyl-[protein] + ADP + H(+). Required for growth within macrophages. Catalyzes the phosphorylation of PtpA on the tyrosine residues at positions 128 and 129, thereby increasing PtpA phosphatase activity and promoting pathogenicity. In Mycobacterium bovis (strain ATCC BAA-935 / AF2122/97), this protein is Tyrosine-protein kinase PtkA.